The sequence spans 489 residues: Carboxyl-terminal-processing peptidase 1, chloroplastic (489 aa).

Residues 1 to 20 (MRLLLPFSSPLSATSSPSTP) show a composition bias toward low complexity. Positions 1–27 (MRLLLPFSSPLSATSSPSTPQFIPELP) are disordered. The region spanning 189-273 (FSRMSKYDIT…TFVVLKVKHG (85 aa)) is the PDZ domain. Active-site charge relay system residues include S403 and K428.

It belongs to the peptidase S41A family.

The protein localises to the plastid. The protein resides in the chloroplast thylakoid lumen. It carries out the reaction The enzyme shows specific recognition of a C-terminal tripeptide, Xaa-Yaa-Zaa, in which Xaa is preferably Ala or Leu, Yaa is preferably Ala or Tyr, and Zaa is preferably Ala, but then cleaves at a variable distance from the C-terminus. A typical cleavage is -Ala-Ala-|-Arg-Ala-Ala-Lys-Glu-Asn-Tyr-Ala-Leu-Ala-Ala.. Functionally, protease involved in the C-terminal processing of the chloroplastic D1 protein of photosystem II. This proteolytic processing is necessary to allow the light-driven assembly of the tetranuclear manganese cluster, which is responsible for photosynthetic water oxidation. This is Carboxyl-terminal-processing peptidase 1, chloroplastic (CTPA1) from Arabidopsis thaliana (Mouse-ear cress).